Reading from the N-terminus, the 526-residue chain is Fumitremorgin C synthase (526 aa).

Residues 4–24 traverse the membrane as a helical segment; sequence LPLSPAVLFLIIVLPILYLWI. Cysteine 443 lines the heme pocket.

It belongs to the cytochrome P450 family. Heme is required as a cofactor.

The protein resides in the membrane. It carries out the reaction tryprostatin A + reduced [NADPH--hemoprotein reductase] + O2 = fumitremorgin C + oxidized [NADPH--hemoprotein reductase] + 2 H2O + H(+). It functions in the pathway mycotoxin biosynthesis. Cytochrome P450 monooxygenase; part of the gene cluster that mediates the biosynthesis of fumitremorgins, indole alkaloids that carry not only intriguing chemical structures, but also interesting biological and pharmacological activities. The biosynthesis of fumitremorgin-type alkaloids begins by condensation of the two amino acids L-tryptophan and L-proline to brevianamide F, catalyzed by the non-ribosomal peptide synthetase ftmA. Brevianamide F is then prenylated by the prenyltransferase ftmPT1/ftmB in the presence of dimethylallyl diphosphate, resulting in the formation of tryprostatin B. The three cytochrome P450 monooxygenases, ftmP450-1/ftmC, ftmP450-2/ftmE and ftmP450-3/FtmG, are responsible for the conversion of tryprostatin B to 6-hydroxytryprostatin B, tryprostatin A to fumitremorgin C and fumitremorgin C to 12,13-dihydroxyfumitremorgin C, respectively. The putative methyltransferase ftmMT/ftmD is expected for the conversion of 6-hydroxytryprostatin B to tryprostatin A. FtmPT2/FtmH catalyzes the prenylation of 12,13-dihydroxyfumitre-morgin C in the presence of dimethylallyl diphosphate, resulting in the formation of fumitremorgin B. Fumitremorgin B is further converted to verruculogen by ftmOx1/ftmF via the insertion of an endoperoxide bond between the two prenyl moieties. In some fungal species, verruculogen is further converted to fumitremorgin A, but the enzymes involved in this step have not been identified yet. The polypeptide is Fumitremorgin C synthase (Aspergillus fumigatus (Neosartorya fumigata)).